A 692-amino-acid polypeptide reads, in one-letter code: Methionine--tRNA ligase (692 aa).

A 'HIGH' region motif is present at residues 26 to 36; that stretch reads PYANGSIHLGH. Positions 157, 160, 170, and 173 each coordinate Zn(2+). Positions 342 to 346 match the 'KMSKS' region motif; sequence KMSKS. K345 lines the ATP pocket. The 103-residue stretch at 590–692 folds into the tRNA-binding domain; it reads DFAKVDLRIA…SGAQPGMRVK (103 aa).

This sequence belongs to the class-I aminoacyl-tRNA synthetase family. MetG type 1 subfamily. In terms of assembly, homodimer. The cofactor is Zn(2+).

The protein resides in the cytoplasm. The enzyme catalyses tRNA(Met) + L-methionine + ATP = L-methionyl-tRNA(Met) + AMP + diphosphate. Is required not only for elongation of protein synthesis but also for the initiation of all mRNA translation through initiator tRNA(fMet) aminoacylation. The protein is Methionine--tRNA ligase of Methylobacillus flagellatus (strain ATCC 51484 / DSM 6875 / VKM B-1610 / KT).